Here is a 412-residue protein sequence, read N- to C-terminus: UPF0754 membrane protein MAE_37850 (412 aa).

Helical transmembrane passes span 3-23 and 387-407; these read LPTL…GYFT and IVNL…IILI.

Belongs to the UPF0754 family.

Its subcellular location is the cell inner membrane. This chain is UPF0754 membrane protein MAE_37850, found in Microcystis aeruginosa (strain NIES-843 / IAM M-2473).